A 320-amino-acid polypeptide reads, in one-letter code: MHDFLSIHPEVAAALKAGRPVVALESTLISHGLPAPANLETAQAIEAAVRANGAVPATIAVLDGRIRVGLDAEDMQRLAAPGTAKVSRRDLPLVLAKGADGATTVAATMIAADLAGIAVFATGGIGGVHRGVETTGDISADLEELATTSVAVVCAGAKAILDLPRTLEYLETRGVPVVGFGTDAFPAFYHRDSGLPVDGRCDTPEDAARVLNAKWRLGLAGGIVVAVPIPDEAALDAAQAEAAVQQAVAEAATGGVRGKALTPFLLHRLETLTGGASLTANRALLLNNAAVGARIAVAYARLKQETTLPKKPPPSKRPTY.

Glu25 (proton donor) is an active-site residue. The substrate site is built by Lys85 and Val105. Asp137 is a Mn(2+) binding site. Ser139 to Asp141 is a binding site for substrate. Catalysis depends on Lys158, which acts as the Nucleophile.

The protein belongs to the pseudouridine-5'-phosphate glycosidase family. As to quaternary structure, homotrimer. Mn(2+) serves as cofactor.

The enzyme catalyses D-ribose 5-phosphate + uracil = psi-UMP + H2O. Catalyzes the reversible cleavage of pseudouridine 5'-phosphate (PsiMP) to ribose 5-phosphate and uracil. Functions biologically in the cleavage direction, as part of a pseudouridine degradation pathway. The chain is Pseudouridine-5'-phosphate glycosidase from Rhodospirillum centenum (strain ATCC 51521 / SW).